Consider the following 101-residue polypeptide: Pro-corazonin (101 aa).

An N-terminal signal peptide occupies residues 1 to 19 (MVTNITLILTLMTLASVTA). Glutamine 20 carries the pyrrolidone carboxylic acid modification. Asparagine amide is present on asparagine 30.

Belongs to the corazonin family.

It is found in the secreted. Cardioactive peptide. Corazonin is probably involved in the physiological regulation of the heart beat. The sequence is that of Pro-corazonin (crz) from Bombyx mori (Silk moth).